Reading from the N-terminus, the 311-residue chain is Olfactory receptor 5M8 (311 aa).

Topologically, residues 1 to 24 (MRRNCTLVTEFILLGLTSRRELQI) are extracellular. Asparagine 4 carries an N-linked (GlcNAc...) asparagine glycan. Residues 25–45 (LLFTLFLAIYMVTVAGNLGMI) traverse the membrane as a helical segment. Residues 46-53 (VLIQANAW) are Cytoplasmic-facing. A helical membrane pass occupies residues 54 to 74 (LHMPMYFFLSHLSFVDLCFSS). Residues 75 to 98 (NVTPKMLEIFLSEKKSISYPACLV) are Extracellular-facing. A disulfide bond links cysteine 96 and cysteine 188. Residues 99–119 (QCYLFIALVHVEIYILAVMAF) traverse the membrane as a helical segment. At 120–138 (DRYMAICNPLLYGSRMSKS) the chain is on the cytoplasmic side. A helical membrane pass occupies residues 139–159 (VCSFLITVPYVYGALTGLMET). Topologically, residues 160–195 (MWTYNLAFCGPNEINHFYCADPPLIKLACSDTYNKE) are extracellular. A helical membrane pass occupies residues 196–216 (LSMFIVAGWNLSFSLFIICIS). Residues 217-236 (YLYIFPAILKIRSTEGRQKA) lie on the Cytoplasmic side of the membrane. Residues 237-257 (FSTCGSHLTAVTIFYATLFFM) traverse the membrane as a helical segment. Residues 258 to 270 (YLRPPSKESVEQG) lie on the Extracellular side of the membrane. Residues 271 to 291 (KMVAVFYTTVIPMLNLIIYSL) traverse the membrane as a helical segment. At 292 to 311 (RNKNVKEALIKELSMKIYFS) the chain is on the cytoplasmic side.

Belongs to the G-protein coupled receptor 1 family.

Its subcellular location is the cell membrane. Odorant receptor. This chain is Olfactory receptor 5M8 (OR5M8), found in Homo sapiens (Human).